The following is a 365-amino-acid chain: GDSL lipase (365 aa).

The first 27 residues, 1–27, serve as a signal peptide directing secretion; the sequence is MAVASRKLGALVLVAVLCLSLPTGCLS. The active-site Nucleophile is serine 40. Asparagine 189 and asparagine 310 each carry an N-linked (GlcNAc...) asparagine glycan. Catalysis depends on charge relay system residues aspartate 318 and histidine 321.

It belongs to the 'GDSL' lipolytic enzyme family. In terms of tissue distribution, restricted to the pericarp during achene maturation. Expressed in the leaves of mature plants and seedlings, as well as in buds and flowers. Present in disk florets.

It is found in the secreted. The protein resides in the extracellular space. It carries out the reaction (Z,S)-pyrethrolone + (1R,3R)-chrysanthemoyl-CoA = pyrethrin I + CoA. The enzyme catalyses (Z,S)-pyrethrolone + (1R,3R)-pyrethroyl-CoA = pyrethrin II + CoA. It catalyses the reaction (Z,S)-jasmololone + (1R,3R)-chrysanthemoyl-CoA = jasmolin I + CoA. The catalysed reaction is (Z,S)-cinerolone + (1R,3R)-chrysanthemoyl-CoA = cinerin I + CoA. It carries out the reaction (Z,S)-jasmololone + (1R,3R)-pyrethroyl-CoA = jasmolin II + CoA. The enzyme catalyses (Z,S)-cinerolone + (1R,3R)-pyrethroyl-CoA = cinerin II + CoA. Its pathway is isoprenoid biosynthesis. Functionally, component of the monoterpenoid pyrethrins biosynthesis; pyrethrins are widely used plant-derived pesticide. Acyltransferase that catalyzes the esterification of terpene acids and lipid alcohol substrates into pyrethrins; mediates the transfer of a chrysanthemoyl moiety from the coenzyme A (CoA) thio-ester chrysanthemoyl CoA to pyrethrolone, and, to a lower extent, to jasmololone and cinerolone thus producing pyrethrins (e.g. pyrethrin type I). Can also use pyrethroyl CoA as substrate. Also has esterase activity, being able to cleave the ester bond of pyrethrin I, p-nitrophenyl butanoate and p-nitrophenyl octanoate to produce pyrethrolone and p-nitrophenol, respectively. This Tanacetum cinerariifolium (Dalmatian daisy) protein is GDSL lipase.